We begin with the raw amino-acid sequence, 980 residues long: Valine--tRNA ligase (980 aa).

The segment at 1-40 (MADKGCEAAQSKDSSAPGSGEPRPKTEKELERERQKAAKL) is disordered. Residues 22–40 (PRPKTEKELERERQKAAKL) are compositionally biased toward basic and acidic residues. The 'HIGH' region signature appears at 139–149 (PNVTGALHIGH). Residues 652-656 (KMSKS) carry the 'KMSKS' region motif. An ATP-binding site is contributed by Lys655.

This sequence belongs to the class-I aminoacyl-tRNA synthetase family.

The protein resides in the cytoplasm. It carries out the reaction tRNA(Val) + L-valine + ATP = L-valyl-tRNA(Val) + AMP + diphosphate. The sequence is that of Valine--tRNA ligase (vas2) from Schizosaccharomyces pombe (strain 972 / ATCC 24843) (Fission yeast).